Here is a 547-residue protein sequence, read N- to C-terminus: Elongator complex protein 3 (547 aa).

Positions 82–372 (RTASGIAVVA…YRVQRDIPMP (291 aa)) constitute a Radical SAM core domain. C99, C109, and C112 together coordinate [4Fe-4S] cluster. S161 is modified (phosphoserine). An acetyl-CoA-binding site is contributed by K164. Y202 carries the phosphotyrosine modification. At K229 the chain carries N6-methyllysine. Residue Y251 is modified to Phosphotyrosine. Residues 396–547 (IQCRDVRTRE…QGPYMVKTLE (152 aa)) form the N-acetyltransferase domain. Residues 474–477 (ELHV), 497–499 (FGM), and Y530 each bind acetyl-CoA.

It belongs to the ELP3 family. In terms of assembly, component of the elongator complex which consists of ELP1, ELP2, ELP3, ELP4, ELP5 and ELP6. ELP1, ELP2 and ELP3 form the elongator core complex. Interacts with alpha-tubulin. [4Fe-4S] cluster is required as a cofactor. In terms of processing, tyrosine-phosphorylated; phosphorylation on Tyr-202 does not affect elongator complex integrity or ELP3 protein stability. Also serine/threonine-phosphorylated.

Its subcellular location is the cytoplasm. It localises to the nucleus. The enzyme catalyses uridine(34) in tRNA + acetyl-CoA + S-adenosyl-L-methionine + H2O = 5-(carboxymethyl)uridine(34) in tRNA + 5'-deoxyadenosine + L-methionine + CoA + 2 H(+). Its pathway is tRNA modification; 5-methoxycarbonylmethyl-2-thiouridine-tRNA biosynthesis. In terms of biological role, catalytic tRNA acetyltransferase subunit of the elongator complex which is required for multiple tRNA modifications, including mcm5U (5-methoxycarbonylmethyl uridine), mcm5s2U (5-methoxycarbonylmethyl-2-thiouridine), and ncm5U (5-carbamoylmethyl uridine). In the elongator complex, acts as a tRNA uridine(34) acetyltransferase by mediating formation of carboxymethyluridine in the wobble base at position 34 in tRNAs. May also act as a protein lysine acetyltransferase by mediating acetylation of target proteins; such activity is however unclear in vivo and recent evidences suggest that ELP3 primarily acts as a tRNA acetyltransferase. Involved in neurogenesis: regulates the migration and branching of projection neurons in the developing cerebral cortex, through a process depending on alpha-tubulin acetylation. Required for acetylation of GJA1 in the developing cerebral cortex. The polypeptide is Elongator complex protein 3 (Bos taurus (Bovine)).